The chain runs to 716 residues: Translation initiation factor IF-2 (716 aa).

The segment at 52–135 is disordered; the sequence is QQESNNNTKQ…PAAEPKEMPS (84 aa). The span at 56–125 shows a compositional bias: low complexity; it reads NNNTKQNTQN…KNNKGNKNNK (70 aa). Positions 218–387 constitute a tr-type G domain; that stretch reads ERPAVVTIMG…GLVAEVQELK (170 aa). A G1 region spans residues 227-234; sequence GHVDHGKT. Residue 227-234 coordinates GTP; the sequence is GHVDHGKT. A G2 region spans residues 252-256; it reads GITQH. The tract at residues 273–276 is G3; sequence DTPG. GTP-binding positions include 273 to 277 and 327 to 330; these read DTPGH and NKID. The tract at residues 327–330 is G4; the sequence is NKID. The G5 stretch occupies residues 363 to 365; that stretch reads SAL.

It belongs to the TRAFAC class translation factor GTPase superfamily. Classic translation factor GTPase family. IF-2 subfamily.

Its subcellular location is the cytoplasm. Its function is as follows. One of the essential components for the initiation of protein synthesis. Protects formylmethionyl-tRNA from spontaneous hydrolysis and promotes its binding to the 30S ribosomal subunits. Also involved in the hydrolysis of GTP during the formation of the 70S ribosomal complex. The protein is Translation initiation factor IF-2 of Staphylococcus haemolyticus (strain JCSC1435).